Reading from the N-terminus, the 317-residue chain is Transaldolase (317 aa).

Residue Lys132 is the Schiff-base intermediate with substrate of the active site.

This sequence belongs to the transaldolase family. Type 1 subfamily. As to quaternary structure, homodimer.

It localises to the cytoplasm. It catalyses the reaction D-sedoheptulose 7-phosphate + D-glyceraldehyde 3-phosphate = D-erythrose 4-phosphate + beta-D-fructose 6-phosphate. It functions in the pathway carbohydrate degradation; pentose phosphate pathway; D-glyceraldehyde 3-phosphate and beta-D-fructose 6-phosphate from D-ribose 5-phosphate and D-xylulose 5-phosphate (non-oxidative stage): step 2/3. In terms of biological role, transaldolase is important for the balance of metabolites in the pentose-phosphate pathway. The polypeptide is Transaldolase (Shewanella amazonensis (strain ATCC BAA-1098 / SB2B)).